Here is a 489-residue protein sequence, read N- to C-terminus: Inactive receptor-like serine/threonine-protein kinase At2g40270 (489 aa).

Residues 1-23 (MLFKMRSFVAFVLLLSWFGSCCS) form the signal peptide. The Extracellular segment spans residues 24 to 139 (LKDQAVDFLK…PRNSHSSVPL (116 aa)). Residues 67 to 130 (KDLPSRKDRK…SAPLANSPIP (64 aa)) form a disordered region. The span at 81–90 (AATTTPSSSP) shows a compositional bias: low complexity. Polar residues predominate over residues 99–116 (TKASTVSEPQKRSSTQDV). Low complexity predominate over residues 117–130 (SPSPSAPLANSPIP). Residues 140–160 (VVGCVGGAFFLLLVATGLYFF) traverse the membrane as a helical segment. The Cytoplasmic portion of the chain corresponds to 161–489 (TSKAGKTVNP…WAELEVLSTA (329 aa)). The region spanning 200 to 460 (EDFSNVIGSC…PTMQEVTGWL (261 aa)) is the Protein kinase domain.

This sequence belongs to the protein kinase superfamily. Ser/Thr protein kinase family.

The protein resides in the cell membrane. This chain is Inactive receptor-like serine/threonine-protein kinase At2g40270, found in Arabidopsis thaliana (Mouse-ear cress).